The sequence spans 472 residues: Probable serine/threonine-protein kinase At1g01540 (472 aa).

Residues 24–44 (LWVVIGILLGSLIVIALFLLS) form a helical membrane-spanning segment. 2 positions are modified to phosphothreonine: Thr-67 and Thr-143. The region spanning 154–431 (LCEENVIGEG…IHMLEAEDLL (278 aa)) is the Protein kinase domain. Residues 160-168 (IGEGGYGIV) and Lys-182 contribute to the ATP site. Tyr-227 carries the post-translational modification Phosphotyrosine. Catalysis depends on Asp-280, which acts as the Proton acceptor. Residue Ser-284 is modified to Phosphoserine. Thr-314 and Thr-319 each carry phosphothreonine. At Tyr-327 the chain carries Phosphotyrosine. Residues 437–449 (RTTRDHGSRERQE) are compositionally biased toward basic and acidic residues. A disordered region spans residues 437–472 (RTTRDHGSRERQETAVVAAGSESGESGSRHHQQKQR). Over residues 451-462 (AVVAAGSESGES) the composition is skewed to low complexity.

Belongs to the protein kinase superfamily. Ser/Thr protein kinase family.

Its subcellular location is the membrane. It catalyses the reaction L-seryl-[protein] + ATP = O-phospho-L-seryl-[protein] + ADP + H(+). The enzyme catalyses L-threonyl-[protein] + ATP = O-phospho-L-threonyl-[protein] + ADP + H(+). This chain is Probable serine/threonine-protein kinase At1g01540, found in Arabidopsis thaliana (Mouse-ear cress).